The chain runs to 206 residues: Regulatory protein CysR (206 aa).

Residues 120 to 196 (RRAEAKLASL…DRALIVRYPE (77 aa)) form the HTH crp-type domain. The segment at residues 156 to 175 (HQVIAELSGSTRVTTTRLLG) is a DNA-binding region (H-T-H motif).

It localises to the cytoplasm. In terms of biological role, probably regulates the expression of genes from the sulfate permease complex. This chain is Regulatory protein CysR (cysR), found in Synechococcus elongatus (strain ATCC 33912 / PCC 7942 / FACHB-805) (Anacystis nidulans R2).